Consider the following 248-residue polypeptide: Phycocyanobilin:ferredoxin oxidoreductase (248 aa).

Belongs to the HY2 family.

The catalysed reaction is (2R,3Z)-phycocyanobilin + 4 oxidized [2Fe-2S]-[ferredoxin] = biliverdin IXalpha + 4 reduced [2Fe-2S]-[ferredoxin] + 4 H(+). Catalyzes the four-electron reduction of biliverdin IX-alpha (2-electron reduction at both the A and D rings); the reaction proceeds via an isolatable 2-electron intermediate, 181,182-dihydrobiliverdin. The polypeptide is Phycocyanobilin:ferredoxin oxidoreductase (pcyA) (Synechocystis sp. (strain ATCC 27184 / PCC 6803 / Kazusa)).